A 164-amino-acid chain; its full sequence is UPF0114 protein YqhA (164 aa).

3 consecutive transmembrane segments (helical) span residues 15-35, 53-73, and 136-156; these read LLAPVYFGLSLALIALALKFF, LILVLLSLVDMTLVGGLLVMV, and LMWYVIIHLTFVLSAFVMGYL.

This sequence belongs to the UPF0114 family.

It localises to the cell membrane. This is UPF0114 protein YqhA from Salmonella dublin (strain CT_02021853).